The sequence spans 440 residues: Diels-Alderase mycB (440 aa).

Positions 1–18 (MGYLVKLACGLLLPLATA) are cleaved as a signal peptide. N-linked (GlcNAc...) asparagine glycosylation is found at Asn-80, Asn-155, and Asn-332.

It belongs to the Diels-Alderase family.

It catalyses the reaction (5S)-5-(2-methylpropyl)-3-[(2E,6R,8E,10E,12E)-6,8,10,12-tetramethyltetradeca-2,8,10,12-tetraenoyl]-2,5-dihydro-1H-pyrrol-2-one = (5S)-3-[(1S,2R,4aR,6R,8aS)-2-(but-2-en-2-yl)-3,4a,6-trimethyl-1,2,4a,5,6,7,8,8a-octahydronaphthalene-1-carbonyl]-5-(2-methylpropyl)-2,5-dihydro-1H-pyrrol-2-one. The catalysed reaction is (5Z)-5-(2-methylpropylidene)-3-[(2E,6R,8E,10E,12E)-6,8,10,12-tetramethyltetradeca-2,8,10,12-tetraenoyl]-2,5-dihydro-1H-pyrrol-2-one = myceliothermophin E. Its pathway is mycotoxin biosynthesis. In terms of biological role, diels-Alderase; part of the gene cluster that mediates the biosynthesis of myceliothermophins, mycotoxins that contain a trans-fused decalin ring system connected to a conjugated 3-pyrrolin-2-one moiety and that have potential anti-tumor properties. The polyketide synthase module (PKS) of the PKS-NRPS mycA is responsible for the synthesis of the octaketide backbone. The downstream nonribosomal peptide synthetase (NRPS) module then amidates the carboxyl end of the octaketide with a leucine. A reductase-like domain (R) at the C-terminus catalyzes the reductive release of the polyketide-amino acid intermediate. Because mycA lacks a designated enoylreductase (ER) domain, the required activity is provided the enoyl reductase mycC. Following mycA-catalyzed construction and release of aminoacyl polyketide aldehyde, Knoevenagel condensation yields the expected ketone. This C18 keto acyclic precursor is the substrate of the Diels-Alderase mycB, that catalyzes the Diels-Alder cycloaddition to produce myceliothermophin E. A yet unknown oxygenase involved in the production of myceliothermophin A, via substitution with a hydroxyl group at the C21, has still to be identified. The protein is Diels-Alderase mycB of Thermothelomyces thermophilus (strain ATCC 42464 / BCRC 31852 / DSM 1799) (Sporotrichum thermophile).